Consider the following 1071-residue polypeptide: Exportin-1 (1071 aa).

The tract at residues 1-679 (MPAIMTMLAD…QQATKNVDIL (679 aa)) is necessary for HTLV-1 Rex-mediated mRNA export. Residues 46–112 (AQEVLTHLKE…KKYVVGLIIK (67 aa)) form the Importin N-terminal domain. HEAT repeat units lie at residues 217–240 (QNAP…PLGY), 241–277 (IFET…VSVS), 354–472 (MLLV…YVDT), 515–553 (RFLV…QYPR), 560–597 (KFLK…KCRR), and 602–639 (VQVG…AVGY). Residues 327 to 450 (CTFLKEHDQL…VREFMKDTDS (124 aa)) are interaction with Ran and nuclear export complex formation. Phosphoserine is present on serine 391. Residues 411 to 414 (PMLF) are necessary for HTLV-1 Rex multimerization. The interval 411–481 (PMLFKVRLLM…TERIMTEKLH (71 aa)) is interaction with RANBP3. N6-acetyllysine is present on lysine 446. At threonine 448 the chain carries Phosphothreonine. Residue serine 450 is modified to Phosphoserine. Tyrosine 454 carries the post-translational modification Phosphotyrosine. An N6-acetyllysine modification is found at lysine 693. 4 HEAT repeats span residues 775–813 (NFVP…KLGG), 885–916 (TMRN…SFYQ), 917–954 (TYFC…NLVE), and 1002–1039 (FSLN…EERE). The tract at residues 800–820 (VLSTMAIIVNKLGGHITAEIP) is interaction with HIV-1 Rev. Serine 1031 is modified (phosphoserine).

The protein belongs to the exportin family. In terms of assembly, found in a U snRNA export complex with PHAX/RNUXA, NCBP1/CBP80, NCBP2/CBP20, RAN, XPO1 and m7G-capped RNA. Component of a nuclear export receptor complex composed of KPNB1, RAN, SNUPN and XPO1. Found in a trimeric export complex with SNUPN, RAN and XPO1. Found in a nuclear export complex with RANBP3 and RAN. Found in a 60S ribosomal subunit export complex with NMD3, RAN, XPO1. Interacts with DDX3X, NMD3, NUP42, NUP88, NUP214, RANBP3 and TERT. Interacts with NEMF (via its N-terminus). Interacts with the monomeric form of BIRC5/survivin deacetylated at 'Lys-129'. Interacts with DTNBP1 and SERTAD2; the interactions translocate DTNBP1 and SERTAD2 out of the nucleus. Interacts with ATF2. Interacts with SLC35G1 and STIM1. Interacts with DCAF8. Interacts with CPEB3. Interacts with HAX1. Interacts with BOK; translocates to the cytoplasm. Interacts with HSP90AB1. Interacts with LRPPRC; interacts with LRPPRC alone and also when LRPPRC is in complex with EIF4E and with EIF4E sensitivity element (4ESE)-containing mRNAs to form an EIF4E-dependent mRNA export complex. As to quaternary structure, (Microbial infection) Interacts with HIV-1 Rev. (Microbial infection) Interacts with HTLV-1 Rex. In terms of assembly, (Microbial infection) Interacts with influenza A nucleoprotein. As to quaternary structure, (Microbial infection) Interacts with Epstein-Barr virus protein BMLF1. (Microbial infection) Part of a tetrameric complex composed of CRM1, importin alpha/beta dimer and the Venezuelan equine encephalitis virus (VEEV) capsid; this complex blocks the receptor-mediated transport through the nuclear pore. In terms of assembly, (Microbial infection) Interacts with SARS-CoV virus protein ORF9b; this interaction mediates protein ORF9b export out of the nucleus. In terms of tissue distribution, expressed in heart, brain, placenta, lung, liver, skeletal muscle, pancreas, spleen, thymus, prostate, testis, ovary, small intestine, colon and peripheral blood leukocytes. Not expressed in the kidney.

Its subcellular location is the cytoplasm. It localises to the nucleus. The protein localises to the nucleoplasm. The protein resides in the cajal body. It is found in the nucleolus. Its function is as follows. Mediates the nuclear export of cellular proteins (cargos) bearing a leucine-rich nuclear export signal (NES) and of RNAs. In the nucleus, in association with RANBP3, binds cooperatively to the NES on its target protein and to the GTPase RAN in its active GTP-bound form (Ran-GTP). Docking of this complex to the nuclear pore complex (NPC) is mediated through binding to nucleoporins. Upon transit of a nuclear export complex into the cytoplasm, disassembling of the complex and hydrolysis of Ran-GTP to Ran-GDP (induced by RANBP1 and RANGAP1, respectively) cause release of the cargo from the export receptor. The directionality of nuclear export is thought to be conferred by an asymmetric distribution of the GTP- and GDP-bound forms of Ran between the cytoplasm and nucleus. Involved in U3 snoRNA transport from Cajal bodies to nucleoli. Binds to late precursor U3 snoRNA bearing a TMG cap. (Microbial infection) Mediates the export of unspliced or incompletely spliced RNAs out of the nucleus from different viruses including HIV-1, HTLV-1 and influenza A. Interacts with, and mediates the nuclear export of HIV-1 Rev and HTLV-1 Rex proteins. Involved in HTLV-1 Rex multimerization. The chain is Exportin-1 (XPO1) from Homo sapiens (Human).